We begin with the raw amino-acid sequence, 450 residues long: Magnesium transporter MgtE (450 aa).

The Cytoplasmic segment spans residues 1 to 283; the sequence is MEEKLAVSLQ…SEAGPVALWL (283 aa). Residues glutamate 59, aspartate 91, aspartate 95, and glycine 136 each coordinate Mg(2+). 2 CBS domains span residues 138 to 200 and 202 to 258; these read MTPE…RVAE and MNPK…EATE. The ATP site is built by tyrosine 170, serine 185, arginine 187, aspartate 188, and valine 207. Mg(2+) contacts are provided by glutamate 216, alanine 223, aspartate 226, aspartate 247, aspartate 250, glutamate 255, glutamate 258, and aspartate 259. Position 275 (glutamate 275) interacts with Ca(2+). Mn(2+)-binding residues include glutamate 275, glutamine 304, glutamate 307, and glutamate 311. The helical transmembrane segment at 284–306 threads the bilayer; sequence ARVRWLVILILTGMVTSSILQGF. Residues 307–315 lie on the Periplasmic side of the membrane; it reads ESVLEAVTA. Ca(2+) is bound at residue glutamate 311. The helical transmembrane segment at 316-337 threads the bilayer; it reads LAFYVPVLLGTGGNTGNQSATL. Over 338-351 the chain is Cytoplasmic; that stretch reads IIRALATRDLDLRD. Residues 352 to 381 traverse the membrane as a helical segment; it reads WRRVFLKEMGVGLLLGLTLSFLLVGKVYWD. The Periplasmic segment spans residues 382–385; that stretch reads GHPL. Residue histidine 383 participates in Mn(2+) binding. The chain crosses the membrane as a helical span at residues 386 to 409; it reads LLPVVGVSLVLIVFFANLVGAMLP. The Cytoplasmic portion of the chain corresponds to 410–420; sequence FLLRRLGVDPA. Mg(2+)-binding residues include aspartate 418, alanine 428, and aspartate 432. The chain crosses the membrane as a helical span at residues 421-443; sequence LVSNPLVATLSDVTGLLIYLSVA. The Periplasmic segment spans residues 444 to 450; that stretch reads RLLLEAV.

Belongs to the SLC41A transporter family. As to quaternary structure, homodimer.

It localises to the cell inner membrane. It catalyses the reaction Mg(2+)(in) = Mg(2+)(out). With respect to regulation, the channel activity is regulated via the N-terminal cytoplasmic region, which acts as a Mg(2+) sensor to regulate the gating of the ion-conducting pore in response to the intracellular magnesium concentration. Under high-intracellular magnesium conditions, binding of magnesium to the N-terminal cytoplasmic domain stabilizes the closed conformation of the channel. Under low-intracellular magnesium conditions, the channel is in equilibrium between the open and closed states. A cation-binding site within the membrane (M1) strictly recognizes the size and geometry of the Mg(2+) hydration shells, which may be important for the selective transport of Mg(2+) over other cations. Cation-binding sites on the periplasmic side (M2 and M3) regulate channel opening and prevent conduction of near-cognate cations. Binding of Mn(2+) to the periplasmic sites strongly inhibits the Mg(2+) transport activity. In addition, activity is regulated by ATP, which binds to MgtE and modulates its Mg(2+)-dependent channel gating. ATP binding enhances the intracellular domain affinity for Mg(2+) within physiological concentrations of this divalent cation, enabling MgtE to function as an in vivo Mg(2+) sensor. ATP dissociation from MgtE upregulates Mg(2+) influx at both high and low intracellular Mg(2+) concentrations. Highly selective magnesium channel that plays an important role in Mg(2+) homeostasis. Functions as a Mg(2+)-dependent gating channel. Exhibits low activity with cobalt, suggesting that it might also be involved in the uptake of Co(2+) as a micronutrient. Also exhibits low activity with Ca(2+), but it shows almost no activity with Mn(2+). In Thermus thermophilus (strain ATCC 27634 / DSM 579 / HB8), this protein is Magnesium transporter MgtE.